A 328-amino-acid polypeptide reads, in one-letter code: Probable cell division protein WhiA (328 aa).

Residues 273–306 (SLEELGALADPPLTKDAVAGRIRRLLAMADKRAS) constitute a DNA-binding region (H-T-H motif).

The protein belongs to the WhiA family. In terms of assembly, monomer in solution.

In terms of biological role, involved in cell division and chromosome segregation. Involved in sporulation. May coordinate the cessation of aerial hyphae growth and subsequent chromosome segregation and/or septation. Required for expression of the ParB partioning protein during sporogenesis. Activates its own transcription and represses WhiB. Binds with low affinity to its own promoter and to the Parp2 sporulation-specific promoter. Also binds directly to the RNA polymerase sigma factor WhiG, leading to inhibition of WhiG-dependent transcription in a dose-dependent manner. The sequence is that of Probable cell division protein WhiA from Streptomyces coelicolor (strain ATCC BAA-471 / A3(2) / M145).